The chain runs to 147 residues: Hemoglobin subunit beta (147 aa).

Position 2 is an N-acetylvaline (V2). The region spanning 3-147 (HLTPEEKSAV…VANALAHKYH (145 aa)) is the Globin domain. At T13 the chain carries Phosphothreonine. Residue S45 is modified to Phosphoserine. An N6-acetyllysine modification is found at K60. Residue H64 participates in heme b binding. Residue K83 is modified to N6-acetyllysine. H93 contacts heme b. C94 is subject to S-nitrosocysteine. The residue at position 145 (K145) is an N6-acetyllysine.

Belongs to the globin family. As to quaternary structure, heterotetramer of two alpha chains and two beta chains. As to expression, red blood cells.

In terms of biological role, involved in oxygen transport from the lung to the various peripheral tissues. The polypeptide is Hemoglobin subunit beta (HBB) (Gorilla gorilla gorilla (Western lowland gorilla)).